A 581-amino-acid polypeptide reads, in one-letter code: Alpha-amylase 2 (581 aa).

An N-terminal signal peptide occupies residues 1-24 (MNYRRNICLRIGWMLLFAFIPAYA). Cys56 and Cys64 are oxidised to a cystine. Position 109 (Trp109) interacts with substrate. Ca(2+) is bound at residue Asn147. The cysteines at positions 176 and 191 are disulfide-linked. A Ca(2+)-binding site is contributed by Asp202. Residue Arg231 coordinates substrate. 3 residues coordinate Ca(2+): Asp233, His237, and Glu257. Asp233 serves as the catalytic Nucleophile. A substrate-binding site is contributed by 236-237 (KH). Glu257 serves as the catalytic Proton donor. Gly261 provides a ligand contact to substrate. A disulfide bond links Cys267 and Cys311. N-linked (GlcNAc...) asparagine glycosylation is present at Asn291. A substrate-binding site is contributed by Asp325. Asn332 carries an N-linked (GlcNAc...) asparagine glycan. Arg372 serves as a coordination point for substrate. A lipid anchor (GPI-anchor amidated serine) is attached at Ser551. A propeptide spans 552–581 (EAKTIRSFTKLKLFILLIAVPFALPMIILI) (removed in mature form).

It belongs to the glycosyl hydrolase 13 family. Ca(2+) serves as cofactor.

It localises to the cell membrane. The enzyme catalyses Endohydrolysis of (1-&gt;4)-alpha-D-glucosidic linkages in polysaccharides containing three or more (1-&gt;4)-alpha-linked D-glucose units.. The sequence is that of Alpha-amylase 2 (aah2) from Schizosaccharomyces pombe (strain 972 / ATCC 24843) (Fission yeast).